The following is a 200-amino-acid chain: Large ribosomal subunit protein uL4 (200 aa).

The tract at residues 38-72 (GRQGTKQQKTRSDVAGGGKRPWRQKGTGRARAGTT) is disordered.

It belongs to the universal ribosomal protein uL4 family. In terms of assembly, part of the 50S ribosomal subunit.

In terms of biological role, one of the primary rRNA binding proteins, this protein initially binds near the 5'-end of the 23S rRNA. It is important during the early stages of 50S assembly. It makes multiple contacts with different domains of the 23S rRNA in the assembled 50S subunit and ribosome. Its function is as follows. Forms part of the polypeptide exit tunnel. The protein is Large ribosomal subunit protein uL4 of Pseudomonas entomophila (strain L48).